Here is a 343-residue protein sequence, read N- to C-terminus: Ubiquitin thioesterase OTU1 (343 aa).

Residues 45–123 (RCKAKGGTHL…IVEEDQTRPK (79 aa)) are UBX-like. Residues 144-269 (LTRTAVPADN…GIHYDPLQRN (126 aa)) form the OTU domain. Residues 149 to 155 (VPADNSC) are cys-loop. Asp-152 is a catalytic residue. Cys-155 (nucleophile) is an active-site residue. Residues 208–218 (IRRDDTWGGAI) form a variable-loop region. Positions 258–262 (YDGIH) are his-loop. Substrate is bound at residue Ile-261. His-262 is an active-site residue. Positions 286-291 (DIVLVQ) are S2 site. A C2H2-type zinc finger spans residues 313–337 (LRCMICQKGLTGQAEARDHARETGH). Residue His-337 is part of the active site.

As to quaternary structure, interacts with VCP; the interaction is direct. Interacts with FAF2/UBXD8. Interacts with DERL1; however interaction is dependent on the UBAX-like region, suggesting that it may be indirect. Interacts with PLAA, UBXN6 and VCP; may form a complex involved in macroautophagy.

Its subcellular location is the cytoplasm. It catalyses the reaction Thiol-dependent hydrolysis of ester, thioester, amide, peptide and isopeptide bonds formed by the C-terminal Gly of ubiquitin (a 76-residue protein attached to proteins as an intracellular targeting signal).. Hydrolase that can remove conjugated ubiquitin from proteins and participates in endoplasmic reticulum-associated degradation (ERAD) for misfolded lumenal proteins. May act by triming the ubiquitin chain on the associated substrate to facilitate their threading through the VCP/p97 pore. Ubiquitin moieties on substrates may present a steric impediment to the threading process when the substrate is transferred to the VCP pore and threaded through VCP's axial channel. Mediates deubiquitination of 'Lys-27'-, 'Lys-29'- and 'Lys-33'-linked polyubiquitin chains. Also able to hydrolyze 'Lys-11'-linked ubiquitin chains. Cleaves both polyubiquitin and di-ubiquitin. May play a role in macroautophagy, regulating for instance the clearance of damaged lysosomes. May recruit PLAA, UBXN6 and VCP to damaged lysosome membranes decorated with K48-linked ubiquitin chains and remove these chains allowing autophagosome formation. The polypeptide is Ubiquitin thioesterase OTU1 (Yod1) (Mus musculus (Mouse)).